The primary structure comprises 796 residues: High affinity nerve growth factor receptor (796 aa).

Residues 1–32 (MLRGGRRGQLGWHSWAAGPGSLLAWLILASAG) form the signal peptide. The Extracellular segment spans residues 33–423 (AAPCPDACCP…TPFGVSVAVG (391 aa)). Disulfide bonds link cysteine 36-cysteine 41 and cysteine 40-cysteine 50. N-linked (GlcNAc...) asparagine glycans are attached at residues asparagine 67, asparagine 95, asparagine 121, asparagine 188, asparagine 202, asparagine 253, asparagine 262, asparagine 281, asparagine 318, asparagine 323, asparagine 338, asparagine 358, and asparagine 401. 2 LRR repeats span residues 90–113 (LGELRNLTIVKSGLRFVAPDAFHF) and 116–137 (RLSRLNLSFNALESLSWKTVQG). In terms of domain architecture, LRRCT spans 148 to 193 (NPLHCSCALRWLQRWEEEGLGGVPEQKLQCHGQGPLAHMPNASCGV). A disulfide bridge connects residues cysteine 154 and cysteine 191. Ig-like C2-type domains lie at 194–283 (PTLK…VNVS) and 299–365 (WCIP…LAAN). Residues cysteine 215 and cysteine 265 are joined by a disulfide bond. Cysteine 300 and cysteine 345 are joined by a disulfide. Residues 424–439 (LAVFACLFLSTLLLVL) traverse the membrane as a helical segment. Topologically, residues 440–796 (NKCGRRNKFG…APPVYLDVLG (357 aa)) are cytoplasmic. The interval 469–490 (MTLGGSSLSPTEGKGSGLQGHI) is interaction with SQSTM1. Position 496 is a phosphotyrosine; by autocatalysis (tyrosine 496). The 272-residue stretch at 510–781 (IVLKWELGEG…HSIKDVHARL (272 aa)) folds into the Protein kinase domain. 516–524 (LGEGAFGKV) provides a ligand contact to ATP. The DXXLL signature appears at 537-541 (DKMLV). Lysine 544 serves as a coordination point for ATP. Residues 607 to 611 (DAKLL) carry the DXXLL motif. The active-site Proton acceptor is the aspartate 650. A phosphotyrosine; by autocatalysis mark is found at tyrosine 676, tyrosine 680, tyrosine 681, and tyrosine 791.

This sequence belongs to the protein kinase superfamily. Tyr protein kinase family. Insulin receptor subfamily. As to quaternary structure, exists in a dynamic equilibrium between monomeric (low affinity) and dimeric (high affinity) structures. Homodimerization is induced by binding of a NGF dimer. Interacts with SQSTM1; bridges NTRK1 to NGFR. Forms a ternary complex with NGFR and KIDINS220; this complex is affected by the expression levels of KIDINS220 and an increase in KIDINS220 expression leads to a decreased association of NGFR and NTRK1. Interacts with SH2D1A; regulates NTRK1. Interacts (phosphorylated upon activation by NGF) with SHC1; mediates SHC1 phosphorylation and activation. Interacts (phosphorylated upon activation by NGF) with PLCG1; mediates PLCG1 phosphorylation and activation. Interacts (phosphorylated) with SH2B1 and SH2B2. Interacts with GRB2. Interacts with PIK3R1. Interacts with FRS2. Interacts with SORT1; may regulate NTRK1 anterograde axonal transport. Interacts with RAB7A. Found in a complex, at least composed of KIDINS220, MAGI2, NTRK1 and RAPGEF2; the complex is mainly formed at late endosomes in a nerve growth factor (NGF)-dependent manner. Interacts with RAPGEF2; the interaction is strengthened after NGF stimulation. Interacts with PTPRS. Interacts with USP36; USP36 does not deubiquitinate NTRK1. Interacts with GGA3. Interacts with TSPAN1; this interaction promotes NTRK1 stability. Ligand-mediated autophosphorylation. Interaction with SQSTM1 is phosphotyrosine-dependent. Autophosphorylation at Tyr-496 mediates interaction and phosphorylation of SHC1. In terms of processing, N-glycosylated. Isoform TrkA-I and isoform TrkA-II are N-glycosylated. Post-translationally, ubiquitinated. Undergoes polyubiquitination upon activation; regulated by NGFR. Ubiquitination by NEDD4L leads to degradation. Ubiquitination regulates the internalization of the receptor. In terms of tissue distribution, isoform TrkA-I is found in most non-neuronal tissues. Isoform TrkA-II is primarily expressed in neuronal cells. TrkA-III is specifically expressed by pluripotent neural stem and neural crest progenitors.

It is found in the cell membrane. The protein resides in the early endosome membrane. Its subcellular location is the late endosome membrane. The protein localises to the recycling endosome membrane. The catalysed reaction is L-tyrosyl-[protein] + ATP = O-phospho-L-tyrosyl-[protein] + ADP + H(+). Its activity is regulated as follows. The pro-survival signaling effect of NTRK1 in neurons requires its endocytosis into signaling early endosomes and its retrograde axonal transport. This is regulated by different proteins including CFL1, RAC1 and SORT1. NTF3 is unable to induce this signaling probably due to the lability of the NTF3-NTRK1 complex in endosomes. SH2D1A inhibits the autophosphorylation of the receptor, and alters the recruitment and activation of downstream effectors and signaling cascades. Regulated by NGFR. Receptor tyrosine kinase involved in the development and the maturation of the central and peripheral nervous systems through regulation of proliferation, differentiation and survival of sympathetic and nervous neurons. High affinity receptor for NGF which is its primary ligand. Can also bind and be activated by NTF3/neurotrophin-3. However, NTF3 only supports axonal extension through NTRK1 but has no effect on neuron survival. Upon dimeric NGF ligand-binding, undergoes homodimerization, autophosphorylation and activation. Recruits, phosphorylates and/or activates several downstream effectors including SHC1, FRS2, SH2B1, SH2B2 and PLCG1 that regulate distinct overlapping signaling cascades driving cell survival and differentiation. Through SHC1 and FRS2 activates a GRB2-Ras-MAPK cascade that regulates cell differentiation and survival. Through PLCG1 controls NF-Kappa-B activation and the transcription of genes involved in cell survival. Through SHC1 and SH2B1 controls a Ras-PI3 kinase-AKT1 signaling cascade that is also regulating survival. In absence of ligand and activation, may promote cell death, making the survival of neurons dependent on trophic factors. In terms of biological role, resistant to NGF, it constitutively activates AKT1 and NF-kappa-B and is unable to activate the Ras-MAPK signaling cascade. Antagonizes the anti-proliferative NGF-NTRK1 signaling that promotes neuronal precursors differentiation. Isoform TrkA-III promotes angiogenesis and has oncogenic activity when overexpressed. This is High affinity nerve growth factor receptor (NTRK1) from Homo sapiens (Human).